The following is a 647-amino-acid chain: 1-phosphatidylinositol 4,5-bisphosphate phosphodiesterase zeta-1 (647 aa).

The region spanning 43-78 (CHFAHVKHIFKENDRQNQGRITIEEFRAIYRCIVHR) is the EF-hand domain. The region spanning 163–307 (QDMNHPLSDY…LKFKILVKNR (145 aa)) is the PI-PLC X-box domain. Catalysis depends on residues H178 and H223. Positions 386–502 (LSDLVIYTKA…GYILKPDILR (117 aa)) constitute a PI-PLC Y-box domain. Residues 502-627 (RDTTLGFNPN…KGYRRVPLFS (126 aa)) enclose the C2 domain.

As to quaternary structure, interacts via its C2 domain with PtdIns(3)P and, to a lesser extent, PtdIns(5)P in vitro. The cofactor is Ca(2+). Highly expressed in postpuberal testis, where expression is sperm cell-specific. Also expressed in brain of both sexes.

It is found in the nucleus. The protein localises to the cytoplasm. Its subcellular location is the perinuclear region. The catalysed reaction is a 1,2-diacyl-sn-glycero-3-phospho-(1D-myo-inositol-4,5-bisphosphate) + H2O = 1D-myo-inositol 1,4,5-trisphosphate + a 1,2-diacyl-sn-glycerol + H(+). Functionally, the production of the second messenger molecules diacylglycerol (DAG) and inositol 1,4,5-trisphosphate (IP3) is mediated by activated phosphatidylinositol-specific phospholipase C enzymes. In vitro, hydrolyzes PtdIns(4,5)P2 in a Ca(2+)-dependent manner. Triggers intracellular Ca(2+) oscillations in oocytes solely during M phase and is involved in inducing oocyte activation and initiating embryonic development up to the blastocyst stage. Is therefore a strong candidate for the egg-activating soluble sperm factor that is transferred from the sperm into the egg cytoplasm following gamete membrane fusion. May exert an inhibitory effect on phospholipase-C-coupled processes that depend on calcium ions and protein kinase C, including CFTR trafficking and function. This chain is 1-phosphatidylinositol 4,5-bisphosphate phosphodiesterase zeta-1, found in Mus musculus (Mouse).